A 177-amino-acid polypeptide reads, in one-letter code: Cell division inhibitor SulA (177 aa).

A ftsZ binding region spans residues 112 to 118 (ALASGNY). A lon protease binding region spans residues 170–177 (KIHSIHYH).

This sequence belongs to the SulA family. Interacts with FtsZ. In terms of processing, is rapidly cleaved and degraded by the Lon protease once DNA damage is repaired.

In terms of biological role, component of the SOS system and an inhibitor of cell division. Accumulation of SulA causes rapid cessation of cell division and the appearance of long, non-septate filaments. In the presence of GTP, binds a polymerization-competent form of FtsZ in a 1:1 ratio, thus inhibiting FtsZ polymerization and therefore preventing it from participating in the assembly of the Z ring. This mechanism prevents the premature segregation of damaged DNA to daughter cells during cell division. The polypeptide is Cell division inhibitor SulA (Photorhabdus laumondii subsp. laumondii (strain DSM 15139 / CIP 105565 / TT01) (Photorhabdus luminescens subsp. laumondii)).